A 428-amino-acid polypeptide reads, in one-letter code: Cysteine synthase 2 (428 aa).

Residues 7–27 (IYIGSAFVAGVVLTIAFKDLF) traverse the membrane as a helical segment. N6-(pyridoxal phosphate)lysine is present on Lys106. Pyridoxal 5'-phosphate-binding positions include 260–264 (GTGGT) and Ser367.

This sequence belongs to the cysteine synthase/cystathionine beta-synthase family. Pyridoxal 5'-phosphate is required as a cofactor.

The protein localises to the mitochondrion outer membrane. It carries out the reaction O-acetyl-L-serine + hydrogen sulfide = L-cysteine + acetate. Its function is as follows. Putative cysteine synthase that catalyzes the conversion of O-acetyl-L-serine (OAS) into cysteine, the last step in the cysteine biosynthesis pathway. However, in contrast to cysteine synthase cysB, this CS-like protein seems not to function in cysteine biosynthesis. The sequence is that of Cysteine synthase 2 from Emericella nidulans (strain FGSC A4 / ATCC 38163 / CBS 112.46 / NRRL 194 / M139) (Aspergillus nidulans).